A 180-amino-acid chain; its full sequence is NAD(P)H-quinone oxidoreductase subunit I, chloroplastic (180 aa).

4Fe-4S ferredoxin-type domains are found at residues 55–84 (GRIHFEFDKCIACEVCVRVCPIDLPVVDWR) and 95–124 (LNYSIDFGICIFCGNCVEYCPTNCLSMTEE). Residues cysteine 64, cysteine 67, cysteine 70, cysteine 74, cysteine 104, cysteine 107, cysteine 110, and cysteine 114 each contribute to the [4Fe-4S] cluster site.

Belongs to the complex I 23 kDa subunit family. As to quaternary structure, NDH is composed of at least 16 different subunits, 5 of which are encoded in the nucleus. It depends on [4Fe-4S] cluster as a cofactor.

It localises to the plastid. Its subcellular location is the chloroplast thylakoid membrane. The catalysed reaction is a plastoquinone + NADH + (n+1) H(+)(in) = a plastoquinol + NAD(+) + n H(+)(out). The enzyme catalyses a plastoquinone + NADPH + (n+1) H(+)(in) = a plastoquinol + NADP(+) + n H(+)(out). In terms of biological role, NDH shuttles electrons from NAD(P)H:plastoquinone, via FMN and iron-sulfur (Fe-S) centers, to quinones in the photosynthetic chain and possibly in a chloroplast respiratory chain. The immediate electron acceptor for the enzyme in this species is believed to be plastoquinone. Couples the redox reaction to proton translocation, and thus conserves the redox energy in a proton gradient. In Amborella trichopoda, this protein is NAD(P)H-quinone oxidoreductase subunit I, chloroplastic.